A 266-amino-acid chain; its full sequence is Undecaprenyl-diphosphatase (266 aa).

The next 8 membrane-spanning stretches (helical) occupy residues 1–21, 39–59, 83–103, 111–131, 149–169, 183–203, 218–238, and 246–266; these read MDTL…FLPI, QGLS…VIYF, SKLA…GFTA, LRGP…LWFA, ALLI…RSGI, AAAR…ALLM, ALAL…YFFL, and MTPF…FIYL.

It belongs to the UppP family.

It localises to the cell inner membrane. It catalyses the reaction di-trans,octa-cis-undecaprenyl diphosphate + H2O = di-trans,octa-cis-undecaprenyl phosphate + phosphate + H(+). Its function is as follows. Catalyzes the dephosphorylation of undecaprenyl diphosphate (UPP). Confers resistance to bacitracin. The sequence is that of Undecaprenyl-diphosphatase from Shewanella amazonensis (strain ATCC BAA-1098 / SB2B).